A 331-amino-acid chain; its full sequence is Putative T-box protein 36 (331 aa).

The T-box DNA-binding region spans 29–210 (EITKKQWNQL…MNRFSRKRKY (182 aa)).

Its subcellular location is the nucleus. In Caenorhabditis elegans, this protein is Putative T-box protein 36 (tbx-36).